The primary structure comprises 285 residues: Ribosomal RNA small subunit methyltransferase A (285 aa).

S-adenosyl-L-methionine is bound by residues asparagine 29, leucine 31, glycine 56, glutamate 77, aspartate 102, and asparagine 123.

The protein belongs to the class I-like SAM-binding methyltransferase superfamily. rRNA adenine N(6)-methyltransferase family. RsmA subfamily.

The protein localises to the cytoplasm. It catalyses the reaction adenosine(1518)/adenosine(1519) in 16S rRNA + 4 S-adenosyl-L-methionine = N(6)-dimethyladenosine(1518)/N(6)-dimethyladenosine(1519) in 16S rRNA + 4 S-adenosyl-L-homocysteine + 4 H(+). In terms of biological role, specifically dimethylates two adjacent adenosines (A1518 and A1519) in the loop of a conserved hairpin near the 3'-end of 16S rRNA in the 30S particle. May play a critical role in biogenesis of 30S subunits. The chain is Ribosomal RNA small subunit methyltransferase A from Clostridium perfringens (strain ATCC 13124 / DSM 756 / JCM 1290 / NCIMB 6125 / NCTC 8237 / Type A).